Consider the following 215-residue polypeptide: NADH-quinone oxidoreductase subunit C (215 aa).

The protein belongs to the complex I 30 kDa subunit family. NDH-1 is composed of 14 different subunits. Subunits NuoB, C, D, E, F, and G constitute the peripheral sector of the complex.

The protein localises to the cell inner membrane. The catalysed reaction is a quinone + NADH + 5 H(+)(in) = a quinol + NAD(+) + 4 H(+)(out). Functionally, NDH-1 shuttles electrons from NADH, via FMN and iron-sulfur (Fe-S) centers, to quinones in the respiratory chain. The immediate electron acceptor for the enzyme in this species is believed to be ubiquinone. Couples the redox reaction to proton translocation (for every two electrons transferred, four hydrogen ions are translocated across the cytoplasmic membrane), and thus conserves the redox energy in a proton gradient. This Francisella philomiragia subsp. philomiragia (strain ATCC 25017 / CCUG 19701 / FSC 153 / O#319-036) protein is NADH-quinone oxidoreductase subunit C.